Reading from the N-terminus, the 63-residue chain is Synergistic-type venom protein C9S3, chain 1 (63 aa).

3 disulfide bridges follow: Cys3–Cys24, Cys17–Cys42, and Cys46–Cys57.

This sequence belongs to the three-finger toxin family. Short-chain subfamily. Aminergic toxin sub-subfamily. Heterodimer of C9S3 chain 1 and chain 2 (AC P01409); disulfide-linked. As to expression, expressed by the venom gland.

The protein localises to the secreted. In terms of biological role, this protein shows a synergetic toxic effect in that it enhances the toxicity of other toxins. In Dendroaspis angusticeps (Eastern green mamba), this protein is Synergistic-type venom protein C9S3, chain 1.